Here is an 887-residue protein sequence, read N- to C-terminus: Alanine--tRNA ligase (887 aa).

Residues His581, His585, Cys683, and His687 each contribute to the Zn(2+) site.

Belongs to the class-II aminoacyl-tRNA synthetase family. The cofactor is Zn(2+).

The protein resides in the cytoplasm. The catalysed reaction is tRNA(Ala) + L-alanine + ATP = L-alanyl-tRNA(Ala) + AMP + diphosphate. Its function is as follows. Catalyzes the attachment of alanine to tRNA(Ala) in a two-step reaction: alanine is first activated by ATP to form Ala-AMP and then transferred to the acceptor end of tRNA(Ala). Also edits incorrectly charged Ser-tRNA(Ala) and Gly-tRNA(Ala) via its editing domain. The protein is Alanine--tRNA ligase of Ehrlichia ruminantium (strain Gardel).